A 212-amino-acid chain; its full sequence is 3-demethoxyubiquinol 3-hydroxylase (212 aa).

The interval 21-42 is disordered; sequence SRMSRPLPVPQESAVTEAAPEL. Positions 61, 91, 94, 143, 175, and 178 each coordinate Fe cation.

This sequence belongs to the COQ7 family. Fe cation serves as cofactor.

The protein localises to the cell membrane. The enzyme catalyses a 5-methoxy-2-methyl-3-(all-trans-polyprenyl)benzene-1,4-diol + AH2 + O2 = a 3-demethylubiquinol + A + H2O. It functions in the pathway cofactor biosynthesis; ubiquinone biosynthesis. Functionally, catalyzes the hydroxylation of 2-nonaprenyl-3-methyl-6-methoxy-1,4-benzoquinol during ubiquinone biosynthesis. This is 3-demethoxyubiquinol 3-hydroxylase from Paraburkholderia xenovorans (strain LB400).